We begin with the raw amino-acid sequence, 1255 residues long: Period circadian protein homolog 2 (1255 aa).

Residues 1–79 (MNGYAEFPPS…EPPDARQSPD (79 aa)) form a disordered region. Residues 35 to 56 (SSGSSGHETNENCSTGRDSQGS) are compositionally biased toward polar residues. The Nuclear export signal 1 signature appears at 111-120 (LIKTLKELKV). The region spanning 181–248 (VTSEHIVKNA…FHSFTSPYKL (68 aa)) is the PAS 1 domain. Residues 308 to 312 (LCCLL) carry the LXXLL motif. Residues 321 to 387 (YEAPRIPPEK…MLAIHKKILQ (67 aa)) enclose the PAS 2 domain. The region spanning 395-438 (YSPIRFRARNGEYITLDTSWSSFINPWSRKISFIIGRHKVRVGP) is the PAC domain. A Nuclear export signal 2 motif is present at residues 462–471 (LTEQIHRLLL). Disordered regions lie at residues 473-557 (PVPH…AVPA) and 617-646 (RSSD…SRTG). The interval 480–484 (SGYGS) is important for protein stability. Residues 504–516 (NGHEDSRRRRAEI) are compositionally biased toward basic and acidic residues. Residues 512-717 (RRAEICKNGN…ALACGLSQEK (206 aa)) form a CSNK1E binding domain region. Phosphoserine is present on residues serine 527, serine 530, serine 533, and serine 540. Residues 529 to 541 (YSHESGEQKKKSV) are compositionally biased toward basic and acidic residues. Phosphoserine occurs at positions 662, 696, 700, 714, 766, and 771. Disordered stretches follow at residues 764 to 838 (ERSK…DTSQ) and 931 to 985 (FPSH…QSRS). Residues 789–805 (KKTGKNRKLKSKRVKPR) carry the Nuclear localization signal motif. A compositionally biased stretch (basic residues) spans 790 to 803 (KTGKNRKLKSKRVK). 2 stretches are compositionally biased toward polar residues: residues 829 to 838 (TAWSPSDTSQ) and 936 to 956 (TLTS…TSIP). An interaction with PPARG region spans residues 888-1071 (QFAVQPPPFP…NEDLCSASGS (184 aa)). Position 945 is a phosphoserine (serine 945). Over residues 959–972 (PCACPATRATPPSA) the composition is skewed to low complexity. A Phosphoserine modification is found at serine 977. Residues 989 to 996 (LQLNLLQL) carry the Nuclear export signal 3 motif. The interval 1018–1050 (VGADCKPGTSRDQQPKAPLTRDEPSDTQNSDAL) is disordered. The LXXLL signature appears at 1057 to 1061 (LNLLL). Positions 1077 to 1106 (LGSGSLGCDASPSGAGSSDTSHTSKYFGSI) are disordered. Residues 1090 to 1106 (GAGSSDTSHTSKYFGSI) show a composition bias toward polar residues. Serine 1124 is modified (phosphoserine). Residues 1155–1255 (SRNLEAVLKE…PLNHRIEEQT (101 aa)) form a CRY binding domain region. The tract at residues 1231 to 1255 (GLSEVSDTKEDENGSPLNHRIEEQT) is disordered.

Homodimer. Component of the circadian core oscillator, which includes the CRY proteins, CLOCK or NPAS2, BMAL1 or BMAL2, CSNK1D and/or CSNK1E, TIMELESS, and the PER proteins. Interacts with CLOCK-BMAL1 (off DNA). Interacts with BMAL2. Interacts directly with PER1 and PER3, and through a C-terminal domain, with CRY1 and CRY2. Interacts (via PAS 2 domain) with TIMELESS. Interacts with NFIL3. Different large complexes have been identified with different repressive functions. The core of PER complexes is composed of at least PER1, PER2, PER3, CRY1, CRY2, CSNK1D and/or CSNK1E. The large PER complex involved in the repression of transcriptional termination is composed of at least PER2, CDK9, DDX5, DHX9, NCBP1 and POLR2A (active). The large PER complex involved in the histone deacetylation is composed of at least HDAC1, PER2, SFPQ and SIN3A. The large PER complex involved in the histone methylation is composed of at least PER2, CBX3, TRIM28, SUV39H1 and/or SUV39H2; CBX3 mediates the formation of the complex. Interacts with SETX; the interaction inhibits termination of circadian target genes. Interacts with the nuclear receptors HNF4A, NR1D1, NR4A2, RORA, PPARA, PPARG and THRA; the interaction with at least PPARG is ligand dependent. Interacts with PML. Interacts (phosphorylated) with BTRC and FBXW11; the interactions trigger proteasomal degradation. Interacts with NONO and SFPQ. Interacts with CAVIN3. Interacts with MAGEL2. Interacts with MAP1LC3B. Interacts with HNF4A. Post-translationally, acetylated. Deacetylated by SIRT1, resulting in decreased protein stability. Deacetylated by SIRT6, preventing its degradation by the proteasome, resulting in increased protein stability. Phosphorylated by CSNK1E and CSNK1D. Phosphorylation results in PER2 protein degradation. May be dephosphorylated by PP1. In terms of processing, ubiquitinated, leading to its proteasomal degradation. Ubiquitination may be inhibited by CRY1. In terms of tissue distribution, widely expressed. Found in heart, brain, placenta, lung, liver, skeleatal muscle, kidney and pancreas. High levels in skeletal muscle and pancreas. Low levels in lung. Isoform 2 is expressed in keratinocytes (at protein level).

The protein resides in the nucleus. It localises to the cytoplasm. The protein localises to the perinuclear region. Its subcellular location is the nucleolus. Functionally, transcriptional repressor which forms a core component of the circadian clock. The circadian clock, an internal time-keeping system, regulates various physiological processes through the generation of approximately 24 hour circadian rhythms in gene expression, which are translated into rhythms in metabolism and behavior. It is derived from the Latin roots 'circa' (about) and 'diem' (day) and acts as an important regulator of a wide array of physiological functions including metabolism, sleep, body temperature, blood pressure, endocrine, immune, cardiovascular, and renal function. Consists of two major components: the central clock, residing in the suprachiasmatic nucleus (SCN) of the brain, and the peripheral clocks that are present in nearly every tissue and organ system. Both the central and peripheral clocks can be reset by environmental cues, also known as Zeitgebers (German for 'timegivers'). The predominant Zeitgeber for the central clock is light, which is sensed by retina and signals directly to the SCN. The central clock entrains the peripheral clocks through neuronal and hormonal signals, body temperature and feeding-related cues, aligning all clocks with the external light/dark cycle. Circadian rhythms allow an organism to achieve temporal homeostasis with its environment at the molecular level by regulating gene expression to create a peak of protein expression once every 24 hours to control when a particular physiological process is most active with respect to the solar day. Transcription and translation of core clock components (CLOCK, NPAS2, BMAL1, BMAL2, PER1, PER2, PER3, CRY1 and CRY2) plays a critical role in rhythm generation, whereas delays imposed by post-translational modifications (PTMs) are important for determining the period (tau) of the rhythms (tau refers to the period of a rhythm and is the length, in time, of one complete cycle). A diurnal rhythm is synchronized with the day/night cycle, while the ultradian and infradian rhythms have a period shorter and longer than 24 hours, respectively. Disruptions in the circadian rhythms contribute to the pathology of cardiovascular diseases, cancer, metabolic syndrome and aging. A transcription/translation feedback loop (TTFL) forms the core of the molecular circadian clock mechanism. Transcription factors, CLOCK or NPAS2 and BMAL1 or BMAL2, form the positive limb of the feedback loop, act in the form of a heterodimer and activate the transcription of core clock genes and clock-controlled genes (involved in key metabolic processes), harboring E-box elements (5'-CACGTG-3') within their promoters. The core clock genes: PER1/2/3 and CRY1/2 which are transcriptional repressors form the negative limb of the feedback loop and interact with the CLOCK|NPAS2-BMAL1|BMAL2 heterodimer inhibiting its activity and thereby negatively regulating their own expression. This heterodimer also activates nuclear receptors NR1D1/2 and RORA/B/G, which form a second feedback loop and which activate and repress BMAL1 transcription, respectively. PER1 and PER2 proteins transport CRY1 and CRY2 into the nucleus with appropriate circadian timing, but also contribute directly to repression of clock-controlled target genes through interaction with several classes of RNA-binding proteins, helicases and others transcriptional repressors. PER appears to regulate circadian control of transcription by at least three different modes. First, interacts directly with the CLOCK-BMAL1 at the tail end of the nascent transcript peak to recruit complexes containing the SIN3-HDAC that remodel chromatin to repress transcription. Second, brings H3K9 methyltransferases such as SUV39H1 and SUV39H2 to the E-box elements of the circadian target genes, like PER2 itself or PER1. The recruitment of each repressive modifier to the DNA seems to be very precisely temporally orchestrated by the large PER complex, the deacetylases acting before than the methyltransferases. Additionally, large PER complexes are also recruited to the target genes 3' termination site through interactions with RNA-binding proteins and helicases that may play a role in transcription termination to regulate transcription independently of CLOCK-BMAL1 interactions. Recruitment of large PER complexes to the elongating polymerase at PER and CRY termination sites inhibited SETX action, impeding RNA polymerase II release and thereby repressing transcriptional reinitiation. May propagate clock information to metabolic pathways via the interaction with nuclear receptors. Coactivator of PPARA and corepressor of NR1D1, binds rhythmically at the promoter of nuclear receptors target genes like BMAL1 or G6PC1. Directly and specifically represses PPARG proadipogenic activity by blocking PPARG recruitment to target promoters and thereby inhibiting transcriptional activation. Required for fatty acid and lipid metabolism, is involved as well in the regulation of circulating insulin levels. Plays an important role in the maintenance of cardiovascular functions through the regulation of NO and vasodilatatory prostaglandins production in aortas. Controls circadian glutamate uptake in synaptic vesicles through the regulation of VGLUT1 expression. May also be involved in the regulation of inflammatory processes. Represses the CLOCK-BMAL1 induced transcription of BHLHE40/DEC1 and ATF4. Negatively regulates the formation of the TIMELESS-CRY1 complex by competing with TIMELESS for binding to CRY1. This Homo sapiens (Human) protein is Period circadian protein homolog 2 (PER2).